A 565-amino-acid chain; its full sequence is Nephronectin (565 aa).

The first 19 residues, 1-19 (MDFLLALVLVSSLYLQAAA), serve as a signal peptide directing secretion. In terms of domain architecture, EGF-like 1 spans 52-87 (SWGQCQPVCQPRCKHGECIGPNKCKCHPGYAGKTCN). Cystine bridges form between Cys-56/Cys-69, Cys-60/Cys-75, Cys-77/Cys-86, Cys-93/Cys-104, Cys-100/Cys-113, and Cys-115/Cys-127. An EGF-like 2; calcium-binding domain is found at 89 to 128 (DLNECGLKPRPCKHRCMNTYGSYKCYCLNGYMLMPDGSCS). Residues 132-168 (TCSMANCQYGCDVVKGQIRCQCPSPGLQLAPDGRTCV) form the EGF-like 3 domain. In terms of domain architecture, EGF-like 4; calcium-binding spans 169 to 213 (DVDECATGRASCPRFRQCVNTFGSYICKCHKGFNLMYIGGKYQCH). 6 disulfide bridges follow: Cys-173/Cys-186, Cys-180/Cys-195, Cys-197/Cys-212, Cys-218/Cys-231, Cys-225/Cys-240, and Cys-242/Cys-253. The region spanning 214–254 (DIDECSLGQYQCSSFARCYNIHGSYKCKCKEGYQGDGLTCV) is the EGF-like 5; calcium-binding domain. The tract at residues 301–373 (YIPPIITNRP…PPGGITVDNR (73 aa)) is disordered. Low complexity predominate over residues 304–316 (PIITNRPTSKPTT). Residues 317-349 (RPTPKPTPIPTPPPPPPLPTELRTPLPPTTPER) are compositionally biased toward pro residues. The Integrin interaction motif lies at 382–384 (RGD). One can recognise an MAM domain in the interval 420–563 (HSCNFDHGLC…VSLKKGHCSE (144 aa)).

Belongs to the nephronectin family. As to quaternary structure, homodimer and homotrimer.

The protein localises to the secreted. The protein resides in the extracellular space. Its subcellular location is the extracellular matrix. Functional ligand of integrin alpha-8/beta-1 in kidney development. Regulates the expression of GDNF with integrin alpha-8/beta-1 which is essential for kidney development. May also play a role in the development and function of various tissues, regulating cell adhesion, spreading and survival through the binding of several integrins. In Pongo abelii (Sumatran orangutan), this protein is Nephronectin (NPNT).